The sequence spans 248 residues: MKVVFLRHGESIWNRENRFTGWTDVDLSSRGIEEAENAARLLKEEGFEFDVAFCSVLKRAIRTLWIVLDKMDRMWIPVEKSWRLNERHYGALQGLNKSEMAKKYGEEQVLLWRRSYDIVPPRLENDDPRHPRFDPRYRSLPADELPAAESLKDTLERTVPYWKERIFPAILSGQKVLVSAHGNSIRALIKYIENMSEKEIVGLNIPTGFPLVYDLDEQGNKLACYYLGDLEEIEKAQHRVAAQGKASS.

Residues 7–14 (RHGESIWN), 20–21 (TG), Arg-59, 86–89 (ERHY), Lys-97, 113–114 (RR), and 182–183 (GN) contribute to the substrate site. His-8 serves as the catalytic Tele-phosphohistidine intermediate. The active-site Proton donor/acceptor is the Glu-86.

It belongs to the phosphoglycerate mutase family. BPG-dependent PGAM subfamily.

It catalyses the reaction (2R)-2-phosphoglycerate = (2R)-3-phosphoglycerate. Its pathway is carbohydrate degradation; glycolysis; pyruvate from D-glyceraldehyde 3-phosphate: step 3/5. Catalyzes the interconversion of 2-phosphoglycerate and 3-phosphoglycerate. The protein is 2,3-bisphosphoglycerate-dependent phosphoglycerate mutase of Methylacidiphilum infernorum (isolate V4) (Methylokorus infernorum (strain V4)).